The primary structure comprises 520 residues: Laccase-1 (520 aa).

An N-terminal signal peptide occupies residues 1-21 (MSRFHSLLAFVVASLTAVAHA). Plastocyanin-like domains lie at 23–148 (IGPV…FVVY) and 160–302 (VDND…ILRY). N-linked (GlcNAc...) asparagine glycans are attached at residues N72 and N75. The Cu cation site is built by H85, H87, H130, and H132. 2 disulfide bridges follow: C106–C509 and C138–C226. N-linked (GlcNAc...) asparagine glycans are attached at residues N229, N238, N354, and N361. The Plastocyanin-like 3 domain occupies 369–491 (TVPVLLQIIS…AGFAVVFAED (123 aa)). The Cu cation site is built by H416, H419, H421, H473, C474, H475, and H479.

This sequence belongs to the multicopper oxidase family. In terms of assembly, homodimer. The cofactor is Cu cation.

It is found in the secreted. It carries out the reaction 4 hydroquinone + O2 = 4 benzosemiquinone + 2 H2O. In terms of biological role, lignin degradation and detoxification of lignin-derived products. In Trametes villosa (White-rot fungus), this protein is Laccase-1.